Here is a 132-residue protein sequence, read N- to C-terminus: MKKNGILNKELNTLLASLGHTDTIVIADCGLPIPNEEARIDLALVKGFPPFLSVLDAVINELVVEEIVLAEEIKTQNPDVYESIKARMSDVPIQFVRHEEFKEMTKQAKAVIRTGEATPYANIILRSGVNFS.

H20 serves as the catalytic Proton donor. Residues D28, H98, and 120 to 122 (YAN) each bind substrate.

It belongs to the RbsD / FucU family. RbsD subfamily. In terms of assembly, homodecamer.

The protein localises to the cytoplasm. It carries out the reaction beta-D-ribopyranose = beta-D-ribofuranose. The protein operates within carbohydrate metabolism; D-ribose degradation; D-ribose 5-phosphate from beta-D-ribopyranose: step 1/2. In terms of biological role, catalyzes the interconversion of beta-pyran and beta-furan forms of D-ribose. The protein is D-ribose pyranase of Geobacillus thermodenitrificans (strain NG80-2).